A 173-amino-acid polypeptide reads, in one-letter code: Large ribosomal subunit protein uL10 (173 aa).

The protein belongs to the universal ribosomal protein uL10 family. In terms of assembly, part of the ribosomal stalk of the 50S ribosomal subunit. The N-terminus interacts with L11 and the large rRNA to form the base of the stalk. The C-terminus forms an elongated spine to which L12 dimers bind in a sequential fashion forming a multimeric L10(L12)X complex.

In terms of biological role, forms part of the ribosomal stalk, playing a central role in the interaction of the ribosome with GTP-bound translation factors. The chain is Large ribosomal subunit protein uL10 from Bifidobacterium animalis subsp. lactis (strain AD011).